Consider the following 92-residue polypeptide: Large ribosomal subunit protein bL27 (92 aa).

Positions 1 to 10 are excised as a propeptide; that stretch reads MLLQLQIQLF.

It belongs to the bacterial ribosomal protein bL27 family. The N-terminus is cleaved by ribosomal processing cysteine protease Prp.

The protein is Large ribosomal subunit protein bL27 of Aster yellows witches'-broom phytoplasma (strain AYWB).